A 790-amino-acid polypeptide reads, in one-letter code: MALNFLQSDCPLAIIQDVISRVDAISDYGYANELSTTLPPRPSRSQVLEYITRVVDTLKPRCRVDERLYVVCGELVHLRIRTRNVEDLKYWLNSTEIALNEIVEKDILDHLDFIQRTLHAFESSEYRELCALGLQSALKYEEMYLAKMRGGRIESMGQFFLRLATTATHYTMEEPAMARVLVSGEVGWTYIFKAYFTALAGQVLIPATPIMLFGGRDCGSLASCYLLNPRVTDMNSAMLALMEEAGPILCNRGGIGLSLQRFNTPPKEGCSRGVMALLKLIDSMTMAINSDGERPTGVCVYFEPWHADIRAILNMRGMLARDETVRCDNIFACMWTPDLFFDRYQRYLDGESGVMWTLFDDTASHLCHMYGKEFEEEYERLEQCGFGVDSIPIQDMAFIIVRSAVMTGSPFLMFKDACNKHYHFDLRRKGAIMGSNLCTEIIQHADETQNGVCNLASINLPKCLAIPPPHTAGVPYFDFAALGRAAATATIFVNSMMRAGTYPTVKSQRGVDENRSLGLGIQGLHTAFLMLDLDMASPEARQLNKQIAERLLLNSMKASATLCRLGMKPFKGFEDSKYSLGELPFDSYPGVTLANRNAWRRLRTEIKQHGLYNSQFVAYMPTVSSSQVTESSEGFSPVYTNLFSKVTATGEVLRPNLLLMRTIRSIFPRECARLQALSTLEMAQWSVVGAFGDLPVGHPLSKFKTAFEYDQRTLIDMCADRAPFVDQSQSMSLFITEPADGKLPASKIMSLLVHAYKRGLKTGMYYCKIKKATNNGVFVGGDLVCTSCSL.

Residues T208, 223–224 (SC), G254, 436–440 (NLCTE), and 621–625 (PTVSS) contribute to the substrate site. A disulfide bridge connects residues C224 and C453. Catalysis depends on N436, which acts as the Proton acceptor. C438 acts as the Cysteine radical intermediate in catalysis. E440 (proton acceptor) is an active-site residue.

The protein belongs to the ribonucleoside diphosphate reductase large chain family. In terms of assembly, heterotetramer composed of a homodimer of the large subunit (R1) and a homodimer of the small subunit (R2). Larger multisubunit protein complex are also active, composed of (R1)n(R2)n.

It catalyses the reaction a 2'-deoxyribonucleoside 5'-diphosphate + [thioredoxin]-disulfide + H2O = a ribonucleoside 5'-diphosphate + [thioredoxin]-dithiol. Ribonucleoside-diphosphate reductase holoenzyme provides the precursors necessary for viral DNA synthesis. Allows virus growth in non-dividing cells, as well as reactivation from latency in infected hosts. Catalyzes the biosynthesis of deoxyribonucleotides from the corresponding ribonucleotides. The polypeptide is Ribonucleoside-diphosphate reductase large subunit (Equus caballus (Horse)).